The chain runs to 622 residues: Phosphomethylpyrimidine synthase (622 aa).

The interval 109–130 (EPISNNNNDRQSSDKQLSFTTN) is disordered. Substrate contacts are provided by residues Asn234, Met263, Tyr292, His328, 348–350 (SRG), 389–392 (DGLR), and Glu428. His432 is a Zn(2+) binding site. Tyr455 provides a ligand contact to substrate. Residue His496 participates in Zn(2+) binding. Residues Cys576, Cys579, and Cys584 each contribute to the [4Fe-4S] cluster site.

It belongs to the ThiC family. As to quaternary structure, homodimer. [4Fe-4S] cluster is required as a cofactor.

It catalyses the reaction 5-amino-1-(5-phospho-beta-D-ribosyl)imidazole + S-adenosyl-L-methionine = 4-amino-2-methyl-5-(phosphooxymethyl)pyrimidine + CO + 5'-deoxyadenosine + formate + L-methionine + 3 H(+). It functions in the pathway cofactor biosynthesis; thiamine diphosphate biosynthesis. Catalyzes the synthesis of the hydroxymethylpyrimidine phosphate (HMP-P) moiety of thiamine from aminoimidazole ribotide (AIR) in a radical S-adenosyl-L-methionine (SAM)-dependent reaction. This Baumannia cicadellinicola subsp. Homalodisca coagulata protein is Phosphomethylpyrimidine synthase.